A 766-amino-acid chain; its full sequence is Probable beta-glucosidase K (766 aa).

The N-linked (GlcNAc...) asparagine glycan is linked to Asn19. Residue Asp196 is part of the active site. 3 N-linked (GlcNAc...) asparagine glycosylation sites follow: Asn288, Asn453, and Asn748. Residues 369–528 (EGQPGLGMRF…DPERAIARAV (160 aa)) form the PA14 domain. The segment at 726–766 (LGRRGRSGSSPAVYRGRSNNVVNRTSHQGAQRISKGGFAAR) is disordered. Over residues 742-756 (RSNNVVNRTSHQGAQ) the composition is skewed to polar residues.

Belongs to the glycosyl hydrolase 3 family.

The protein resides in the secreted. It catalyses the reaction Hydrolysis of terminal, non-reducing beta-D-glucosyl residues with release of beta-D-glucose.. Its pathway is glycan metabolism; cellulose degradation. Functionally, beta-glucosidases are one of a number of cellulolytic enzymes involved in the degradation of cellulosic biomass. Catalyzes the last step releasing glucose from the inhibitory cellobiose. The sequence is that of Probable beta-glucosidase K (bglK) from Aspergillus fumigatus (strain CBS 144.89 / FGSC A1163 / CEA10) (Neosartorya fumigata).